Consider the following 217-residue polypeptide: MKRTATPDSPALFDLVDTGPDFAFELEAKKKGFWPVAGTDEAGRGPLAGPVVAAAVILDPDNIPKGMDDSKKLTRQKRESLFVQIMETSIVSVASSGPGLIDSVNILRASLDAMRRAVLGLEIPPALVLADGRDRPPGIPCEAKAVIKGDSRSLSIAAASIIAKVTRDRMMERAGVVHTSYGFEGHAGYGTPAHLRAIESHGPCALHRMSFRPLKRD.

In terms of domain architecture, RNase H type-2 spans 34 to 217 (WPVAGTDEAG…RMSFRPLKRD (184 aa)). Positions 40, 41, and 131 each coordinate a divalent metal cation.

The protein belongs to the RNase HII family. Mn(2+) is required as a cofactor. Mg(2+) serves as cofactor.

The protein resides in the cytoplasm. It catalyses the reaction Endonucleolytic cleavage to 5'-phosphomonoester.. Endonuclease that specifically degrades the RNA of RNA-DNA hybrids. This chain is Ribonuclease HII, found in Agrobacterium fabrum (strain C58 / ATCC 33970) (Agrobacterium tumefaciens (strain C58)).